A 500-amino-acid polypeptide reads, in one-letter code: Cytochrome P450 6B4 (500 aa).

Heme is bound at residue cysteine 443.

Belongs to the cytochrome P450 family. Requires heme as cofactor.

The protein localises to the endoplasmic reticulum membrane. The protein resides in the microsome membrane. It carries out the reaction an organic molecule + reduced [NADPH--hemoprotein reductase] + O2 = an alcohol + oxidized [NADPH--hemoprotein reductase] + H2O + H(+). Enables the insect to feed on furanocoumarin-producing plants and evolved as an adaptation for detoxification of xanthotoxin and other furanocoumarins. This isozyme metabolizes isopimpinellin, imperatorin, and bergapten at high rates, xanthotoxin and psoralen at intermediate rates and angelicin, sphondin, and trioxsalen only at very low rates. In Papilio glaucus (Eastern tiger swallowtail butterfly), this protein is Cytochrome P450 6B4 (CYP6B4).